A 121-amino-acid chain; its full sequence is Large ribosomal subunit protein bL21 (121 aa).

Belongs to the bacterial ribosomal protein bL21 family. As to quaternary structure, part of the 50S ribosomal subunit. Contacts protein L20.

Its function is as follows. This protein binds to 23S rRNA in the presence of protein L20. The chain is Large ribosomal subunit protein bL21 from Synechococcus sp. (strain CC9605).